Consider the following 95-residue polypeptide: Aspartyl/glutamyl-tRNA(Asn/Gln) amidotransferase subunit C (95 aa).

Belongs to the GatC family. As to quaternary structure, heterotrimer of A, B and C subunits.

It catalyses the reaction L-glutamyl-tRNA(Gln) + L-glutamine + ATP + H2O = L-glutaminyl-tRNA(Gln) + L-glutamate + ADP + phosphate + H(+). The enzyme catalyses L-aspartyl-tRNA(Asn) + L-glutamine + ATP + H2O = L-asparaginyl-tRNA(Asn) + L-glutamate + ADP + phosphate + 2 H(+). Its function is as follows. Allows the formation of correctly charged Asn-tRNA(Asn) or Gln-tRNA(Gln) through the transamidation of misacylated Asp-tRNA(Asn) or Glu-tRNA(Gln) in organisms which lack either or both of asparaginyl-tRNA or glutaminyl-tRNA synthetases. The reaction takes place in the presence of glutamine and ATP through an activated phospho-Asp-tRNA(Asn) or phospho-Glu-tRNA(Gln). This Cereibacter sphaeroides (strain ATCC 17025 / ATH 2.4.3) (Rhodobacter sphaeroides) protein is Aspartyl/glutamyl-tRNA(Asn/Gln) amidotransferase subunit C.